The following is a 542-amino-acid chain: Chaperonin GroEL (542 aa).

ATP is bound by residues 29–32 (TLGP), 86–90 (DGTTT), G413, 476–478 (NAA), and D492. Residues 523 to 542 (EPAAPAMPGGMDPSMMGGMM) form a disordered region. Residues 526–542 (APAMPGGMDPSMMGGMM) show a composition bias toward low complexity.

It belongs to the chaperonin (HSP60) family. In terms of assembly, forms a cylinder of 14 subunits composed of two heptameric rings stacked back-to-back. Interacts with the co-chaperonin GroES.

Its subcellular location is the cytoplasm. The catalysed reaction is ATP + H2O + a folded polypeptide = ADP + phosphate + an unfolded polypeptide.. Functionally, together with its co-chaperonin GroES, plays an essential role in assisting protein folding. The GroEL-GroES system forms a nano-cage that allows encapsulation of the non-native substrate proteins and provides a physical environment optimized to promote and accelerate protein folding. The sequence is that of Chaperonin GroEL from Streptococcus uberis (strain ATCC BAA-854 / 0140J).